The sequence spans 141 residues: Hemoglobin subunit alpha-1 (141 aa).

A Globin domain is found at 1–141 (VLSPEDKNNV…VSTVLTSKYR (141 aa)). H58 is an O2 binding site. Residue H87 participates in heme b binding.

It belongs to the globin family. As to quaternary structure, heterotetramer of two alpha chains and two beta chains. As to expression, red blood cells.

Involved in oxygen transport from the lung to the various peripheral tissues. The polypeptide is Hemoglobin subunit alpha-1 (Tadarida brasiliensis (Brazilian free-tailed bat)).